Here is a 166-residue protein sequence, read N- to C-terminus: Large ribosomal subunit protein uL10 (166 aa).

Belongs to the universal ribosomal protein uL10 family. Part of the ribosomal stalk of the 50S ribosomal subunit. The N-terminus interacts with L11 and the large rRNA to form the base of the stalk. The C-terminus forms an elongated spine to which L12 dimers bind in a sequential fashion forming a multimeric L10(L12)X complex.

Forms part of the ribosomal stalk, playing a central role in the interaction of the ribosome with GTP-bound translation factors. This is Large ribosomal subunit protein uL10 from Phytoplasma australiense.